Here is a 369-residue protein sequence, read N- to C-terminus: Chaperone protein DnaJ (369 aa).

The region spanning 5 to 69 is the J domain; it reads DYYDVLGISK…NKKAQYDRFG (65 aa). Residues 131–213 form a CR-type zinc finger; the sequence is GTTKNVSVDI…CSGAGRVKAK (83 aa). 8 residues coordinate Zn(2+): Cys144, Cys147, Cys161, Cys164, Cys187, Cys190, Cys201, and Cys204. 4 CXXCXGXG motif repeats span residues 144–151, 161–168, 187–194, and 201–208; these read CGHCHGSG, CSKCHGQG, CPQCQGEG, and CHVCSGAG.

The protein belongs to the DnaJ family. As to quaternary structure, homodimer. Zn(2+) serves as cofactor.

It localises to the cytoplasm. Functionally, participates actively in the response to hyperosmotic and heat shock by preventing the aggregation of stress-denatured proteins and by disaggregating proteins, also in an autonomous, DnaK-independent fashion. Unfolded proteins bind initially to DnaJ; upon interaction with the DnaJ-bound protein, DnaK hydrolyzes its bound ATP, resulting in the formation of a stable complex. GrpE releases ADP from DnaK; ATP binding to DnaK triggers the release of the substrate protein, thus completing the reaction cycle. Several rounds of ATP-dependent interactions between DnaJ, DnaK and GrpE are required for fully efficient folding. Also involved, together with DnaK and GrpE, in the DNA replication of plasmids through activation of initiation proteins. This Acholeplasma laidlawii protein is Chaperone protein DnaJ.